Consider the following 1483-residue polypeptide: Neuropathy target esterase sws (1483 aa).

Residues 1–34 (MDVLELLRASANGCYNTLFSDAWFQYVSKQIATT) lie on the Lumenal side of the membrane. Residues 35–55 (MYWYGALLVIGVLFIAWFLYF) form a helical membrane-spanning segment. The Cytoplasmic segment spans residues 56–1483 (KRLARLRLRD…ENLTKTDTKN (1428 aa)). A nucleoside 3',5'-cyclic phosphate is bound at residue 174–301 (IFGHFEKPIF…IRVIQVIMIR (128 aa)). 2 disordered regions span residues 348 to 380 (ASRP…PNAN) and 404 to 440 (SSAV…GTSI). Over residues 413–440 (GTRRSSTTYGPSGESPNGNANTAPGTSI) the composition is skewed to polar residues. Phosphoserine is present on residues S418 and S424. A nucleoside 3',5'-cyclic phosphate contacts are provided by residues 456–585 (ELGL…VVRR) and 574–701 (IVLD…LSHR). One can recognise a PNPLA domain in the interval 927–1093 (LVLGGGGARG…VNNLPGHLWR (167 aa)). The GXGXXG signature appears at 931–936 (GGGARG). The GXSXG signature appears at 958–962 (GVSIG). S960 acts as the Nucleophile in catalysis. Residue D1080 is the Proton acceptor of the active site. Residues 1080-1082 (DGG) carry the DGA/G motif. Residue S1174 is modified to Phosphoserine. The segment at 1349–1483 (DKATQSTPPT…ENLTKTDTKN (135 aa)) is disordered. Residues 1351 to 1373 (ATQSTPPTPNKQHALSPTSSQTN) are compositionally biased toward polar residues. A compositionally biased stretch (basic and acidic residues) spans 1382–1396 (KPKEKQPSYDKLDRE). Positions 1410-1419 (ERSSMQQRDS) are enriched in low complexity. A compositionally biased stretch (basic and acidic residues) spans 1445–1458 (LNKPEQQPEQKPVP). Positions 1465 to 1474 (QKQQDQQQQE) are enriched in low complexity.

The protein belongs to the NTE family. As to quaternary structure, interacts with Pka-C3; interaction inhibits the catalytic function of Pka-C3 and the esterase activity of sws.

Its subcellular location is the endoplasmic reticulum membrane. The enzyme catalyses a 1-acyl-sn-glycero-3-phosphocholine + H2O = sn-glycerol 3-phosphocholine + a fatty acid + H(+). Phospholipase B that deacylates intracellular phosphatidylcholine (PtdCho), generating glycerophosphocholine (GroPtdCho). This deacylation occurs at both sn-2 and sn-1 positions of PtdCho. Its specific chemical modification by certain organophosphorus (OP) compounds leads to distal axonopathy. Plays a role in the signaling mechanism between neurons and glia that regulates glia wrapping during development of the adult brain. Essential for membrane lipid homeostasis and cell survival in both neurons and glia of the adult brain. In Drosophila virilis (Fruit fly), this protein is Neuropathy target esterase sws.